A 405-amino-acid polypeptide reads, in one-letter code: Acetyl-CoA decarbonylase/synthase complex subunit delta (405 aa).

It belongs to the CdhD family. As to quaternary structure, heterodimer of delta and gamma chains. The ACDS complex is made up of alpha, epsilon, beta, gamma and delta chains with a probable stoichiometry of (alpha(2)epsilon(2))(4)-beta(8)-(gamma(1)delta(1))(8).

Its function is as follows. Part of a complex that catalyzes the reversible cleavage of acetyl-CoA, allowing autotrophic growth from CO(2). Probably maintains the overall quaternary structure of the ACDS complex. This Methanocaldococcus jannaschii (strain ATCC 43067 / DSM 2661 / JAL-1 / JCM 10045 / NBRC 100440) (Methanococcus jannaschii) protein is Acetyl-CoA decarbonylase/synthase complex subunit delta.